The primary structure comprises 182 residues: uncharacterized protein (182 aa).

The region spanning 1 to 170 is the Macro domain; that stretch reads MIVKIIKGDI…IFVNIFEREL (170 aa).

This is an uncharacterized protein from Sulfurisphaera tokodaii (strain DSM 16993 / JCM 10545 / NBRC 100140 / 7) (Sulfolobus tokodaii).